We begin with the raw amino-acid sequence, 193 residues long: Flagellar transcriptional regulator FlhC (193 aa).

Residues cysteine 138, cysteine 141, cysteine 158, and cysteine 161 each contribute to the Zn(2+) site.

This sequence belongs to the FlhC family. As to quaternary structure, heterohexamer composed of two FlhC and four FlhD subunits. Each FlhC binds a FlhD dimer, forming a heterotrimer, and a hexamer assembles by dimerization of two heterotrimers. It depends on Zn(2+) as a cofactor.

It localises to the cytoplasm. Functionally, functions in complex with FlhD as a master transcriptional regulator that regulates transcription of several flagellar and non-flagellar operons by binding to their promoter region. Activates expression of class 2 flagellar genes, including fliA, which is a flagellum-specific sigma factor that turns on the class 3 genes. Also regulates genes whose products function in a variety of physiological pathways. The polypeptide is Flagellar transcriptional regulator FlhC (Yersinia enterocolitica).